Here is a 427-residue protein sequence, read N- to C-terminus: 3-phosphoshikimate 1-carboxyvinyltransferase (427 aa).

Positions 22, 23, and 27 each coordinate 3-phosphoshikimate. Residue Lys22 participates in phosphoenolpyruvate binding. Residues Gly96 and Arg124 each contribute to the phosphoenolpyruvate site. Positions 169, 170, 171, 197, 313, 336, and 340 each coordinate 3-phosphoshikimate. Residue Gln171 coordinates phosphoenolpyruvate. Catalysis depends on Asp313, which acts as the Proton acceptor. Residues Arg344, Arg386, and Lys411 each coordinate phosphoenolpyruvate.

The protein belongs to the EPSP synthase family. As to quaternary structure, monomer.

It localises to the cytoplasm. The catalysed reaction is 3-phosphoshikimate + phosphoenolpyruvate = 5-O-(1-carboxyvinyl)-3-phosphoshikimate + phosphate. The protein operates within metabolic intermediate biosynthesis; chorismate biosynthesis; chorismate from D-erythrose 4-phosphate and phosphoenolpyruvate: step 6/7. Functionally, catalyzes the transfer of the enolpyruvyl moiety of phosphoenolpyruvate (PEP) to the 5-hydroxyl of shikimate-3-phosphate (S3P) to produce enolpyruvyl shikimate-3-phosphate and inorganic phosphate. The protein is 3-phosphoshikimate 1-carboxyvinyltransferase of Salmonella typhimurium (strain LT2 / SGSC1412 / ATCC 700720).